A 359-amino-acid chain; its full sequence is Gap junction alpha-5 protein (359 aa).

Over 1–19 the chain is Cytoplasmic; it reads MGDWSFLGEFLEEVHKHST. The helical transmembrane segment at 20–40 threads the bilayer; it reads VIGKVWLTVLFIFRMLVLGTA. Over 41–76 the chain is Extracellular; sequence AESSWGDEQADFLCDTMQPGCENVCYDQAFPISHIR. A helical membrane pass occupies residues 77-97; the sequence is YWVLQVIFVSTPSLVYLGHAV. The Cytoplasmic portion of the chain corresponds to 98–165; the sequence is HMVRVQEKRK…CSILIRTTME (68 aa). A helical transmembrane segment spans residues 166 to 186; it reads VAFIVGQYLLYGVFLDTLHVC. At 187 to 206 the chain is on the extracellular side; sequence RRSPCPHPVNCYVSRPTEKN. A helical membrane pass occupies residues 207–227; that stretch reads VFIVFMLAVAGLSLFLSLAEL. Residues 228 to 359 lie on the Cytoplasmic side of the membrane; sequence YHLGWKKIRQ…SKARSDDLSV (132 aa). Disordered stretches follow at residues 285–305 and 317–359; these read SNKM…VRSQ and RYAQ…DLSV. Residues serine 354 and serine 358 each carry the phosphoserine modification.

The protein belongs to the connexin family. Alpha-type (group II) subfamily. In terms of assembly, a connexon is composed of a hexamer of connexins.

It is found in the cell membrane. The protein resides in the cell junction. It localises to the gap junction. Its function is as follows. One gap junction consists of a cluster of closely packed pairs of transmembrane channels, the connexons, through which materials of low MW diffuse from one cell to a neighboring cell. The protein is Gap junction alpha-5 protein (GJA5) of Bos taurus (Bovine).